A 593-amino-acid polypeptide reads, in one-letter code: Pyruvate decarboxylase 1 (593 aa).

Residues 1–19 (METETETPNGSTPCPTSAP) are compositionally biased toward polar residues. The tract at residues 1–20 (METETETPNGSTPCPTSAPS) is disordered. Aspartate 55 and histidine 142 together coordinate substrate. A thiamine pyrophosphate binding region spans residues 420–502 (DSWFNCQKLR…FLINNGGYTI (83 aa)). Mg(2+) contacts are provided by aspartate 470, asparagine 497, and glycine 499. Glutamate 503 provides a ligand contact to substrate.

This sequence belongs to the TPP enzyme family. Homotetramer. A metal cation serves as cofactor. The cofactor is thiamine diphosphate.

The enzyme catalyses a 2-oxocarboxylate + H(+) = an aldehyde + CO2. This chain is Pyruvate decarboxylase 1 (PDC1), found in Pisum sativum (Garden pea).